We begin with the raw amino-acid sequence, 943 residues long: Isoleucine--tRNA ligase (943 aa).

The short motif at 58–68 (PYANGSIHIGH) is the 'HIGH' region element. L-isoleucyl-5'-AMP is bound at residue E567. Positions 608–612 (KMSKS) match the 'KMSKS' region motif. K611 contributes to the ATP binding site. The Zn(2+) site is built by C906, C909, C926, and C929.

It belongs to the class-I aminoacyl-tRNA synthetase family. IleS type 1 subfamily. Monomer. Requires Zn(2+) as cofactor.

Its subcellular location is the cytoplasm. It carries out the reaction tRNA(Ile) + L-isoleucine + ATP = L-isoleucyl-tRNA(Ile) + AMP + diphosphate. In terms of biological role, catalyzes the attachment of isoleucine to tRNA(Ile). As IleRS can inadvertently accommodate and process structurally similar amino acids such as valine, to avoid such errors it has two additional distinct tRNA(Ile)-dependent editing activities. One activity is designated as 'pretransfer' editing and involves the hydrolysis of activated Val-AMP. The other activity is designated 'posttransfer' editing and involves deacylation of mischarged Val-tRNA(Ile). The sequence is that of Isoleucine--tRNA ligase from Pseudomonas paraeruginosa (strain DSM 24068 / PA7) (Pseudomonas aeruginosa (strain PA7)).